The primary structure comprises 152 residues: SsrA-binding protein (152 aa).

It belongs to the SmpB family.

Its subcellular location is the cytoplasm. Required for rescue of stalled ribosomes mediated by trans-translation. Binds to transfer-messenger RNA (tmRNA), required for stable association of tmRNA with ribosomes. tmRNA and SmpB together mimic tRNA shape, replacing the anticodon stem-loop with SmpB. tmRNA is encoded by the ssrA gene; the 2 termini fold to resemble tRNA(Ala) and it encodes a 'tag peptide', a short internal open reading frame. During trans-translation Ala-aminoacylated tmRNA acts like a tRNA, entering the A-site of stalled ribosomes, displacing the stalled mRNA. The ribosome then switches to translate the ORF on the tmRNA; the nascent peptide is terminated with the 'tag peptide' encoded by the tmRNA and targeted for degradation. The ribosome is freed to recommence translation, which seems to be the essential function of trans-translation. This Rickettsia africae (strain ESF-5) protein is SsrA-binding protein.